We begin with the raw amino-acid sequence, 476 residues long: NADH-quinone oxidoreductase subunit N (476 aa).

The next 14 helical transmembrane spans lie at 10–30 (AVLPELLLALSAVVLVLIGAI), 42–62 (LAIAALVAAGVLVMLQPAVTI), 77–97 (FMKVVALLGAAVSLIMSVDWL), 108–128 (AVLVVLASLGICILISAGDLI), 129–149 (ALYLGLELMSLSLYVVAAINR), 162–182 (FVLGALSSGMLLYGASLIYGF), 202–222 (LVFGIVFLFAGLCFKVSAVPF), 234–254 (PTPVTAFFATAPKVAAMAVFV), 268–288 (WQQIVTFVSIASMALGAFAAI), 296–316 (LLAYSSIGHMGFALVGLAAGT), 323–343 (VLLYMAIYVVMTLGSFTCVLA), 368–388 (ALALAALMFSLAGIPPLAGFV), 392–412 (YVFLAAIQAGLYGLAVIGVVA), and 445–465 (AVLAVSGLFTTFFFLAPTPLI).

It belongs to the complex I subunit 2 family. NDH-1 is composed of 14 different subunits. Subunits NuoA, H, J, K, L, M, N constitute the membrane sector of the complex.

Its subcellular location is the cell inner membrane. It carries out the reaction a quinone + NADH + 5 H(+)(in) = a quinol + NAD(+) + 4 H(+)(out). In terms of biological role, NDH-1 shuttles electrons from NADH, via FMN and iron-sulfur (Fe-S) centers, to quinones in the respiratory chain. The immediate electron acceptor for the enzyme in this species is believed to be ubiquinone. Couples the redox reaction to proton translocation (for every two electrons transferred, four hydrogen ions are translocated across the cytoplasmic membrane), and thus conserves the redox energy in a proton gradient. This is NADH-quinone oxidoreductase subunit N from Azorhizobium caulinodans (strain ATCC 43989 / DSM 5975 / JCM 20966 / LMG 6465 / NBRC 14845 / NCIMB 13405 / ORS 571).